Consider the following 975-residue polypeptide: Lateral signaling target protein 2 homolog (975 aa).

Disordered regions lie at residues Pro299 to Glu458 and Tyr504 to Ser523. Composition is skewed to low complexity over residues Ser302–Thr352, Asn365–Asn376, Thr383–Ala400, and Pro408–Trp429. Residues Ser430–Glu458 show a composition bias toward acidic residues. Phosphoserine is present on residues Ser540 and Ser541. 2 disordered regions span residues Glu556–Ser633 and Asp740–Ala891. The span at Gly564 to Arg602 shows a compositional bias: basic residues. Positions Leu621 to Ser633 are enriched in low complexity. Polar residues predominate over residues Ala751–Leu770. Ser796 carries the phosphoserine modification. Low complexity-rich tracts occupy residues Ala802–Ala860 and Pro877–Pro890. An FYVE-type zinc finger spans residues Asp895–Val955. Positions 901, 904, 917, 920, 925, 928, 947, and 950 each coordinate Zn(2+).

This sequence belongs to the lst-2 family.

Negative regulator of epidermal growth factor receptor (EGFR) signaling. The sequence is that of Lateral signaling target protein 2 homolog from Drosophila sechellia (Fruit fly).